Reading from the N-terminus, the 539-residue chain is Kynureninase 2 (539 aa).

Residues 60–87 (DGGVAGETKEPRVPNGVSSATKPNGTVN) form a disordered region. The segment covering 75-87 (GVSSATKPNGTVN) has biased composition (polar residues). Residues Leu-171, Thr-172, 199 to 202 (FPSD), Asp-290, His-293, and Tyr-315 contribute to the pyridoxal 5'-phosphate site. The residue at position 316 (Lys-316) is an N6-(pyridoxal phosphate)lysine. A compositionally biased stretch (gly residues) spans 340–352 (GGGGSGGVGGGRG). The disordered stretch occupies residues 340–363 (GGGGSGGVGGGRGEGGDGDGGDGG). Trp-379 and Asn-407 together coordinate pyridoxal 5'-phosphate.

Belongs to the kynureninase family. Homodimer. Pyridoxal 5'-phosphate serves as cofactor.

It localises to the cytoplasm. It catalyses the reaction L-kynurenine + H2O = anthranilate + L-alanine + H(+). It carries out the reaction 3-hydroxy-L-kynurenine + H2O = 3-hydroxyanthranilate + L-alanine + H(+). It participates in amino-acid degradation; L-kynurenine degradation; L-alanine and anthranilate from L-kynurenine: step 1/1. Its pathway is cofactor biosynthesis; NAD(+) biosynthesis; quinolinate from L-kynurenine: step 2/3. In terms of biological role, catalyzes the cleavage of L-kynurenine (L-Kyn) and L-3-hydroxykynurenine (L-3OHKyn) into anthranilic acid (AA) and 3-hydroxyanthranilic acid (3-OHAA), respectively. This chain is Kynureninase 2, found in Chaetomium globosum (strain ATCC 6205 / CBS 148.51 / DSM 1962 / NBRC 6347 / NRRL 1970) (Soil fungus).